Reading from the N-terminus, the 249-residue chain is Methylthioribulose-1-phosphate dehydratase (249 aa).

The segment at 1-25 is disordered; sequence MVDIKPEQTQEGNNNDHLVQSDDPE. Over residues 9 to 18 the composition is skewed to polar residues; that stretch reads TQEGNNNDHL. Cys105 contacts substrate. Zn(2+)-binding residues include His122 and His124. Glu151 acts as the Proton donor/acceptor in catalysis. A Zn(2+)-binding site is contributed by His207.

It belongs to the aldolase class II family. MtnB subfamily. Zn(2+) serves as cofactor.

Its subcellular location is the cytoplasm. The catalysed reaction is 5-(methylsulfanyl)-D-ribulose 1-phosphate = 5-methylsulfanyl-2,3-dioxopentyl phosphate + H2O. The protein operates within amino-acid biosynthesis; L-methionine biosynthesis via salvage pathway; L-methionine from S-methyl-5-thio-alpha-D-ribose 1-phosphate: step 2/6. Functionally, catalyzes the dehydration of methylthioribulose-1-phosphate (MTRu-1-P) into 2,3-diketo-5-methylthiopentyl-1-phosphate (DK-MTP-1-P). The polypeptide is Methylthioribulose-1-phosphate dehydratase (Arthroderma otae (strain ATCC MYA-4605 / CBS 113480) (Microsporum canis)).